A 27-amino-acid polypeptide reads, in one-letter code: Natriuretic peptides A (27 aa).

C7 and C23 are joined by a disulfide.

Belongs to the natriuretic peptide family.

It localises to the secreted. Hormone playing a key role in cardiovascular homeostasis through regulation of natriuresis, diuresis, and vasodilation. Has a cGMP-stimulating activity. The polypeptide is Natriuretic peptides A (nppa) (Anguilla japonica (Japanese eel)).